Reading from the N-terminus, the 4391-residue chain is Basement membrane-specific heparan sulfate proteoglycan core protein (4391 aa).

The signal sequence occupies residues 1–21; that stretch reads MGWRAAGALLLALLLHGRLLA. O-linked (GalNAc...) threonine glycosylation is present at threonine 42. Residues serine 65, serine 71, and serine 76 are each glycosylated (O-linked (Xyl...) (heparan sulfate) serine). One can recognise an SEA domain in the interval 80–191; it reads QMVYFRALVN…QGFQFRRLGT (112 aa). Asparagine 89 is a glycosylation site (N-linked (GlcNAc...) asparagine). LDL-receptor class A domains follow at residues 198–235, 284–320, 324–360, and 367–404; these read ACTEAEFACHSYNECVALEYRCDRRPDCRDMSDELNCE, PCGPQEAACRNGHCIPRDYLCDGQEDCEDGSDELDCG, PCEPNEFPCGNGHCALKLWRCDGDFDCEDRTDEANCP, and VCGPTQFRCVSTNMCIPASFHCDEESDCPDRSDEFGCM. 12 cysteine pairs are disulfide-bonded: cysteine 199–cysteine 212, cysteine 206–cysteine 225, cysteine 219–cysteine 234, cysteine 285–cysteine 297, cysteine 292–cysteine 310, cysteine 304–cysteine 319, cysteine 325–cysteine 337, cysteine 332–cysteine 350, cysteine 344–cysteine 359, cysteine 368–cysteine 381, cysteine 375–cysteine 394, and cysteine 388–cysteine 403. An Ig-like C2-type 1 domain is found at 405–504; it reads PPQVVTPPRE…VLELVPQRGP (100 aa). In terms of domain architecture, Laminin EGF-like 1; first part spans 521-530; it reads CFCFGITSVC. Residues 538–730 form the Laminin IV type A 1 domain; the sequence is DQIRLRFDQP…SHGRAHSVEE (193 aa). N-linked (GlcNAc...) asparagine glycosylation occurs at asparagine 554. A Laminin EGF-like 1; second part domain is found at 731 to 763; that stretch reads CRCPIGYSGLSCESCDAHFTRVPGGPYLGTCSG. 11 disulfides stabilise this stretch: cysteine 764-cysteine 773, cysteine 766-cysteine 780, cysteine 783-cysteine 792, cysteine 795-cysteine 811, cysteine 814-cysteine 829, cysteine 816-cysteine 839, cysteine 842-cysteine 851, cysteine 854-cysteine 869, cysteine 879-cysteine 892, cysteine 894-cysteine 903, and cysteine 906-cysteine 921. 2 Laminin EGF-like domains span residues 764 to 813 and 814 to 871; these read CNCN…SCRP and CPCP…KCRP. Positions 879-923 constitute a Laminin EGF-like 4; truncated domain; the sequence is CDERGSMGTSGEACRCKNNVVGRLCNECADGSFHLSTRNPDGCLK. Residues 924 to 933 form the Laminin EGF-like 5; first part domain; it reads CFCMGVSRHC. The region spanning 941 to 1125 is the Laminin IV type A 2 domain; that stretch reads AQLHGASEEP…GQDPALEVEQ (185 aa). The region spanning 1126–1158 is the Laminin EGF-like 5; second part domain; it reads CSCPPGYRGPSCQDCDTGYTRTPSGLYLGTCER. 12 disulfides stabilise this stretch: cysteine 1159-cysteine 1168, cysteine 1161-cysteine 1175, cysteine 1178-cysteine 1187, cysteine 1190-cysteine 1206, cysteine 1209-cysteine 1224, cysteine 1211-cysteine 1234, cysteine 1237-cysteine 1246, cysteine 1249-cysteine 1263, cysteine 1275-cysteine 1287, cysteine 1277-cysteine 1293, cysteine 1295-cysteine 1304, and cysteine 1307-cysteine 1322. Laminin EGF-like domains lie at 1159 to 1208, 1209 to 1265, and 1275 to 1324; these read CSCH…DCQL, CPCY…PCQR, and CNCD…GCLP. The Laminin EGF-like 9; first part domain maps to 1325–1334; that stretch reads CFCMGITQQC. Positions 1344-1529 constitute a Laminin IV type A 3 domain; that stretch reads ISTHFAPGDF…NRPRALEVEE (186 aa). Residues 1530 to 1562 form the Laminin EGF-like 9; second part domain; sequence CRCPPGYIGLSCQDCAPGYTRTGSGLYLGHCEL. Cystine bridges form between cysteine 1563-cysteine 1572, cysteine 1565-cysteine 1579, cysteine 1582-cysteine 1591, cysteine 1594-cysteine 1610, cysteine 1613-cysteine 1628, cysteine 1615-cysteine 1638, cysteine 1641-cysteine 1650, and cysteine 1653-cysteine 1668. Laminin EGF-like domains lie at 1563 to 1612 and 1613 to 1670; these read CECN…DCQP and CACP…QCLP. 21 Ig-like C2-type domains span residues 1677-1771, 1772-1865, 1866-1955, 1956-2051, 2052-2151, 2152-2244, 2245-2340, 2341-2436, 2437-2533, 2534-2629, 2630-2726, 2727-2826, 2827-2924, 2925-3021, 3022-3112, 3113-3211, 3212-3298, 3299-3399, 3400-3488, 3489-3574, and 3575-3662; these read LVVE…SKPI, TVTV…TLSA, PVVS…GGGG, PRVQ…ASPP, PVKI…PGST, RPIR…PGPI, PPVR…AGST, QPIR…LGVT, PTVR…QGVA, YPVR…PSVS, PPIR…PGSS, MPIR…PGGA, PPIR…PGLA, QPIY…RLRS, PVIS…HGPP, TVSV…APGA, PQVQ…VESP, PYAT…AGST, PTVQ…ALPS, VLIN…LVQA, and LPQI…PERV. An N-linked (GlcNAc...) asparagine glycan is attached at asparagine 1755. N-linked (GlcNAc...) asparagine glycosylation is present at asparagine 2121. Positions 2994–3014 are disordered; the sequence is ASGPGPEQEASFTVTVPPSEG. An O-linked (Xyl...) (chondroitin sulfate) serine glycan is attached at serine 2995. Over residues 3003–3014 the composition is skewed to polar residues; it reads ASFTVTVPPSEG. N-linked (GlcNAc...) asparagine glycans are attached at residues asparagine 3072 and asparagine 3105. N-linked (GlcNAc...) asparagine glycosylation occurs at asparagine 3279. Positions 3663 to 3843 constitute a Laminin G-like 1 domain; sequence VPYFTQTPYS…DLNLTAHGIS (181 aa). N-linked (GlcNAc...) asparagine glycosylation is found at asparagine 3780 and asparagine 3836. 7 disulfides stabilise this stretch: cysteine 3819/cysteine 3845, cysteine 3848/cysteine 3859, cysteine 3853/cysteine 3869, cysteine 3871/cysteine 3880, cysteine 3888/cysteine 3899, cysteine 3893/cysteine 3910, and cysteine 3912/cysteine 3921. 2 EGF-like domains span residues 3844-3881 and 3884-3922; these read HCPTCRDRPCQNGGQCHDSESSSYVCVCPAGFTGSRCE and QALHCHPEACGPDATCVNRPDGRGYTCRCHLGRSGLRCE. The Laminin G-like 2 domain maps to 3928–4103; it reads TTPSLSGAGS…LGSQGIGQCY (176 aa). The O-linked (Xyl...) (chondroitin sulfate) serine glycan is linked to serine 3933. Asparagine 4068 carries N-linked (GlcNAc...) asparagine glycosylation. Disulfide bonds link cysteine 4076–cysteine 4102, cysteine 4108–cysteine 4119, cysteine 4113–cysteine 4129, cysteine 4131–cysteine 4140, cysteine 4147–cysteine 4159, cysteine 4153–cysteine 4164, and cysteine 4166–cysteine 4175. 2 EGF-like domains span residues 4104–4141 and 4143–4176; these read DSSPCERQPCQHGATCMPAGEYEFQCLCRDGFKGDLCE and EENPCQLREPCLHGGTCQGTRCLCLPGFSGPRCQ. The interval 4149-4151 is mediates motor neuron attachment; it reads LRE. O-linked (Xyl...) (chondroitin sulfate) serine glycans are attached at residues serine 4179 and serine 4193. The Laminin G-like 3 domain occupies 4201-4389; sequence QYGAYFHDDG…AQAGANTRPC (189 aa). Ca(2+) is bound by residues aspartate 4258 and leucine 4275. The interval 4299-4301 is mediates motor neuron attachment; it reads LRE. Residues alanine 4325 and asparagine 4327 each coordinate Ca(2+). Cysteine 4355 and cysteine 4389 are joined by a disulfide. The segment at 4364 to 4391 is disordered; the sequence is ARPGAPPPQPLDLQHRAQAGANTRPCPS.

Has a strong tendency to aggregate in dimers or stellate structures. Interacts with other basement membrane components such as laminin, prolargin and collagen type IV. Interacts with COL13A1. Interacts with FGFBP1. Interacts with VWA1. Interacts (via C-terminus) with ECM1 (via C-terminus). Interacts with SVEP1. Post-translationally, proteolytic processing produces the C-terminal angiogenic peptide, endorepellin. This peptide can be further processed to produce the LG3 peptide. In terms of processing, O-glycosylated with core 1 or possibly core 8 glycans. Contains three heparan sulfate chains. Also contains chondroitin sulfate. Detected in cerebrospinal fluid, fibroblasts and urine (at protein level).

It localises to the secreted. Its subcellular location is the extracellular space. The protein localises to the extracellular matrix. It is found in the basement membrane. In terms of biological role, integral component of basement membranes. Component of the glomerular basement membrane (GBM), responsible for the fixed negative electrostatic membrane charge, and which provides a barrier which is both size- and charge-selective. It serves as an attachment substrate for cells. Plays essential roles in vascularization. Critical for normal heart development and for regulating the vascular response to injury. Also required for avascular cartilage development. Its function is as follows. Anti-angiogenic and anti-tumor peptide that inhibits endothelial cell migration, collagen-induced endothelial tube morphogenesis and blood vessel growth in the chorioallantoic membrane. Blocks endothelial cell adhesion to fibronectin and type I collagen. Anti-tumor agent in neovascularization. Interaction with its ligand, integrin alpha2/beta1, is required for the anti-angiogenic properties. Evokes a reduction in phosphorylation of receptor tyrosine kinases via alpha2/beta1 integrin-mediated activation of the tyrosine phosphatase, PTPN6. Has anti-angiogenic properties that require binding of calcium ions for full activity. The protein is Basement membrane-specific heparan sulfate proteoglycan core protein (HSPG2) of Homo sapiens (Human).